Here is a 390-residue protein sequence, read N- to C-terminus: Probable L-tyrosine/L-aspartate decarboxylase (390 aa).

Lys-239 carries the post-translational modification N6-(pyridoxal phosphate)lysine.

It belongs to the group II decarboxylase family. MfnA subfamily. Pyridoxal 5'-phosphate is required as a cofactor.

It carries out the reaction L-tyrosine + H(+) = tyramine + CO2. The enzyme catalyses L-aspartate + H(+) = beta-alanine + CO2. The protein operates within cofactor biosynthesis; methanofuran biosynthesis. It participates in cofactor biosynthesis; coenzyme A biosynthesis. In terms of biological role, catalyzes the decarboxylation of L-tyrosine to produce tyramine for methanofuran biosynthesis. Can also catalyze the decarboxylation of L-aspartate to produce beta-alanine for coenzyme A (CoA) biosynthesis. In Methanococcus aeolicus (strain ATCC BAA-1280 / DSM 17508 / OCM 812 / Nankai-3), this protein is Probable L-tyrosine/L-aspartate decarboxylase.